The sequence spans 714 residues: Fatty acid oxidation complex subunit alpha (714 aa).

Positions 1 to 190 (MEMTSAFTLN…KLGLVDDVVP (190 aa)) are enoyl-CoA hydratase. The tract at residues 306-714 (APLNSVGILG…FWKTTATDLQ (409 aa)) is 3-hydroxyacyl-CoA dehydrogenase.

The protein in the N-terminal section; belongs to the enoyl-CoA hydratase/isomerase family. It in the central section; belongs to the 3-hydroxyacyl-CoA dehydrogenase family. Heterotetramer of two alpha chains (FadJ) and two beta chains (FadI).

It is found in the cytoplasm. The catalysed reaction is a (3S)-3-hydroxyacyl-CoA = a (2E)-enoyl-CoA + H2O. It catalyses the reaction a 4-saturated-(3S)-3-hydroxyacyl-CoA = a (3E)-enoyl-CoA + H2O. It carries out the reaction a (3S)-3-hydroxyacyl-CoA + NAD(+) = a 3-oxoacyl-CoA + NADH + H(+). The enzyme catalyses (3S)-3-hydroxybutanoyl-CoA = (3R)-3-hydroxybutanoyl-CoA. The protein operates within lipid metabolism; fatty acid beta-oxidation. Catalyzes the formation of a hydroxyacyl-CoA by addition of water on enoyl-CoA. Also exhibits 3-hydroxyacyl-CoA epimerase and 3-hydroxyacyl-CoA dehydrogenase activities. This is Fatty acid oxidation complex subunit alpha from Escherichia coli (strain 55989 / EAEC).